The sequence spans 637 residues: Conglutin beta 5 (637 aa).

Residues 1 to 30 (MAKMRVRFPMLVLLLGVVFLLAVSIGIAYG) form the signal peptide. Composition is skewed to basic and acidic residues over residues 33–105 (DVIK…REQE), 136–174 (RREEREQEQGSSSESRRQSGDERRHRHEKREQREEREQE), and 184–203 (DYGRRQRHEGREQREEREQE). 2 disordered regions span residues 33 to 221 (DVIK…YFSS) and 384 to 439 (EQED…LRSN). The region spanning 217-375 (YYFSSERFQT…TFNTHYEEIQ (159 aa)) is the Cupin type-1 1 domain. A compositionally biased stretch (basic and acidic residues) spans 389–417 (EQRREQEQSHQDEGVIVRVSKEQIQELRK). The Cupin type-1 2 domain maps to 434–594 (FNLRSNEPIY…IFPGSAEDVE (161 aa)). Residue N544 is glycosylated (N-linked (GlcNAc...) asparagine). The segment covering 606-615 (ANAQPQQQQQ) has biased composition (low complexity). Residues 606-626 (ANAQPQQQQQQREKEGRRGRR) are disordered.

Belongs to the 7S seed storage protein family. As to quaternary structure, component of globulins complexes which accumulate in seeds.

Its function is as follows. Seed storage protein. Accumulates during seed development and is hydrolyzed after germination to provide a carbon and nitrogen source for the developing seedling. This chain is Conglutin beta 5, found in Lupinus angustifolius (Narrow-leaved blue lupine).